The sequence spans 236 residues: 2,3,4,5-tetrahydropyridine-2,6-dicarboxylate N-acetyltransferase (236 aa).

The protein belongs to the transferase hexapeptide repeat family. DapH subfamily.

It catalyses the reaction (S)-2,3,4,5-tetrahydrodipicolinate + acetyl-CoA + H2O = L-2-acetamido-6-oxoheptanedioate + CoA. It participates in amino-acid biosynthesis; L-lysine biosynthesis via DAP pathway; LL-2,6-diaminopimelate from (S)-tetrahydrodipicolinate (acetylase route): step 1/3. In terms of biological role, catalyzes the transfer of an acetyl group from acetyl-CoA to tetrahydrodipicolinate. In Listeria ivanovii, this protein is 2,3,4,5-tetrahydropyridine-2,6-dicarboxylate N-acetyltransferase.